The chain runs to 135 residues: Large ribosomal subunit protein mL61 (135 aa).

Residues 114 to 129 (HHESSPENIKEAHKQD) show a composition bias toward basic and acidic residues. The disordered stretch occupies residues 114 to 135 (HHESSPENIKEAHKQDYSPPSN).

Belongs to the mitochondrion-specific ribosomal protein mL61 family. Component of the mitochondrial large ribosomal subunit (mt-LSU). Mature yeast 74S mitochondrial ribosomes consist of a small (37S) and a large (54S) subunit. The 37S small subunit contains a 15S ribosomal RNA (15S mt-rRNA) and at least 32 different proteins. The 54S large subunit contains a 21S rRNA (21S mt-rRNA) and at least 45 different proteins.

It localises to the mitochondrion. Component of the mitochondrial ribosome (mitoribosome), a dedicated translation machinery responsible for the synthesis of mitochondrial genome-encoded proteins, including at least some of the essential transmembrane subunits of the mitochondrial respiratory chain. The mitoribosomes are attached to the mitochondrial inner membrane and translation products are cotranslationally integrated into the membrane. mL61 is not essential in cells grown at 30 degrees Celsius but is required for mitochondrial translation in cells grown at 18 degrees Celsius. The protein is Large ribosomal subunit protein mL61 (mrp49) of Schizosaccharomyces pombe (strain 972 / ATCC 24843) (Fission yeast).